The following is a 485-amino-acid chain: Aspartyl/glutamyl-tRNA(Asn/Gln) amidotransferase subunit B (485 aa).

The protein belongs to the GatB/GatE family. GatB subfamily. In terms of assembly, heterotrimer of A, B and C subunits.

It catalyses the reaction L-glutamyl-tRNA(Gln) + L-glutamine + ATP + H2O = L-glutaminyl-tRNA(Gln) + L-glutamate + ADP + phosphate + H(+). The enzyme catalyses L-aspartyl-tRNA(Asn) + L-glutamine + ATP + H2O = L-asparaginyl-tRNA(Asn) + L-glutamate + ADP + phosphate + 2 H(+). Its function is as follows. Allows the formation of correctly charged Asn-tRNA(Asn) or Gln-tRNA(Gln) through the transamidation of misacylated Asp-tRNA(Asn) or Glu-tRNA(Gln) in organisms which lack either or both of asparaginyl-tRNA or glutaminyl-tRNA synthetases. The reaction takes place in the presence of glutamine and ATP through an activated phospho-Asp-tRNA(Asn) or phospho-Glu-tRNA(Gln). The polypeptide is Aspartyl/glutamyl-tRNA(Asn/Gln) amidotransferase subunit B (Borrelia turicatae (strain 91E135)).